Reading from the N-terminus, the 292-residue chain is tRNA (guanine-N(1)-)-methyltransferase (292 aa).

Residues G151 and 175–180 each bind S-adenosyl-L-methionine; that span reads IGDYVL.

Belongs to the RNA methyltransferase TrmD family. In terms of assembly, homodimer.

The protein resides in the cytoplasm. It carries out the reaction guanosine(37) in tRNA + S-adenosyl-L-methionine = N(1)-methylguanosine(37) in tRNA + S-adenosyl-L-homocysteine + H(+). In terms of biological role, specifically methylates guanosine-37 in various tRNAs. This Corynebacterium diphtheriae (strain ATCC 700971 / NCTC 13129 / Biotype gravis) protein is tRNA (guanine-N(1)-)-methyltransferase.